The sequence spans 929 residues: Isoleucine--tRNA ligase (929 aa).

Residues 58 to 68 (PYANGDIHIGH) carry the 'HIGH' region motif. Glu563 contributes to the L-isoleucyl-5'-AMP binding site. Residues 605-609 (KMSKS) carry the 'KMSKS' region motif. Lys608 provides a ligand contact to ATP. Zn(2+) is bound by residues Cys892, Cys895, Cys912, and Cys915.

It belongs to the class-I aminoacyl-tRNA synthetase family. IleS type 1 subfamily. In terms of assembly, monomer. It depends on Zn(2+) as a cofactor.

The protein resides in the cytoplasm. It carries out the reaction tRNA(Ile) + L-isoleucine + ATP = L-isoleucyl-tRNA(Ile) + AMP + diphosphate. Functionally, catalyzes the attachment of isoleucine to tRNA(Ile). As IleRS can inadvertently accommodate and process structurally similar amino acids such as valine, to avoid such errors it has two additional distinct tRNA(Ile)-dependent editing activities. One activity is designated as 'pretransfer' editing and involves the hydrolysis of activated Val-AMP. The other activity is designated 'posttransfer' editing and involves deacylation of mischarged Val-tRNA(Ile). This chain is Isoleucine--tRNA ligase, found in Neisseria meningitidis serogroup A / serotype 4A (strain DSM 15465 / Z2491).